The sequence spans 325 residues: MIVVGIDHGTSGITACVMENKTVKSIFKMKRTEINENSFLKELEKHVNLNDIDLMGVCYSMGDGIDNITDIKKVDNRGVINLEGIGKKVGGGTRVYDEIKSSNIPAVVIPGLHKDVKSMDERFNALFSHIASPEKISICYNAYKTFGFENFILSDISSNTVTLLIKNGKIFGGFDACVGAVGILHGPLDLELIRNIDAKKITANEAFSKAGVVKVTESYKGVEDTKFEIMSNYKNNEKCKLAVDSLVLSVSMEINSLMFLTPDKNVILAGSIGIWENPNVSEMIKENIDGNVLVLNEESGAIGSAMIAEDILNGKKDILGIPVDF.

The protein belongs to the UPF0285 family.

In Methanococcus maripaludis (strain C5 / ATCC BAA-1333), this protein is UPF0285 protein MmarC5_0962.